We begin with the raw amino-acid sequence, 264 residues long: 5'-nucleotidase SurE (264 aa).

4 residues coordinate a divalent metal cation: Asp-10, Asp-11, Ser-43, and Asn-99.

It belongs to the SurE nucleotidase family. Requires a divalent metal cation as cofactor.

It localises to the cytoplasm. The enzyme catalyses a ribonucleoside 5'-phosphate + H2O = a ribonucleoside + phosphate. In terms of biological role, nucleotidase that shows phosphatase activity on nucleoside 5'-monophosphates. This chain is 5'-nucleotidase SurE, found in Methanococcus maripaludis (strain C7 / ATCC BAA-1331).